The following is a 393-amino-acid chain: NAD(P)H-quinone oxidoreductase subunit H, chloroplastic (393 aa).

This sequence belongs to the complex I 49 kDa subunit family. In terms of assembly, NDH is composed of at least 16 different subunits, 5 of which are encoded in the nucleus.

The protein localises to the plastid. It is found in the chloroplast thylakoid membrane. It catalyses the reaction a plastoquinone + NADH + (n+1) H(+)(in) = a plastoquinol + NAD(+) + n H(+)(out). The enzyme catalyses a plastoquinone + NADPH + (n+1) H(+)(in) = a plastoquinol + NADP(+) + n H(+)(out). NDH shuttles electrons from NAD(P)H:plastoquinone, via FMN and iron-sulfur (Fe-S) centers, to quinones in the photosynthetic chain and possibly in a chloroplast respiratory chain. The immediate electron acceptor for the enzyme in this species is believed to be plastoquinone. Couples the redox reaction to proton translocation, and thus conserves the redox energy in a proton gradient. The chain is NAD(P)H-quinone oxidoreductase subunit H, chloroplastic from Populus alba (White poplar).